We begin with the raw amino-acid sequence, 57 residues long: Small ribosomal subunit protein bS21 (57 aa).

The protein belongs to the bacterial ribosomal protein bS21 family.

In Geobacillus kaustophilus (strain HTA426), this protein is Small ribosomal subunit protein bS21.